A 340-amino-acid polypeptide reads, in one-letter code: Flavonoid 7-O-methyltransferase 2 (340 aa).

Aspartate 207 provides a ligand contact to S-adenosyl-L-methionine. Histidine 245 functions as the Proton acceptor in the catalytic mechanism.

This sequence belongs to the class I-like SAM-binding methyltransferase superfamily. Cation-independent O-methyltransferase family. As to quaternary structure, homodimer. Expressed in leaves.

The enzyme catalyses scutellarein 4'-methyl ether + S-adenosyl-L-methionine = ladanein + S-adenosyl-L-homocysteine. It carries out the reaction acacetin + S-adenosyl-L-methionine = apigenin 4',7-dimethyl ether + S-adenosyl-L-homocysteine. The catalysed reaction is diosmetin + S-adenosyl-L-methionine = luteolin 4',7-dimethyl ether + S-adenosyl-L-homocysteine. It catalyses the reaction chrysoeriol + S-adenosyl-L-methionine = velutin + S-adenosyl-L-homocysteine. The enzyme catalyses (2S)-naringenin + S-adenosyl-L-methionine = (2S)-sakuranetin + S-adenosyl-L-homocysteine + H(+). It carries out the reaction apigenin + S-adenosyl-L-methionine = genkwanin + S-adenosyl-L-homocysteine + H(+). The catalysed reaction is luteolin + S-adenosyl-L-methionine = luteolin 7-methyl ether + S-adenosyl-L-homocysteine + H(+). It catalyses the reaction scutellarein + S-adenosyl-L-methionine = scutellarein 7-methyl ether + S-adenosyl-L-homocysteine. It participates in flavonoid metabolism. Flavonoid 7-O-methyltransferase involved in the biosynthesis of polymethoxylated flavonoids natural products such as nevadensin and salvigenin, aroma compounds which contribute to the flavor of sweet basil, and exhibit pharmacological activities such as anti-allergic, anti-oxidant, antibacterial, anti-proliferative, and anti-inflammatory effects. Catalyzes S-adenosylmethionine-dependent regioselective 7-O-methylation of flavonoids; active on various hydroxylated flavonoid substrates, including apigenin (API) and luteolin (LUT), and, with a lower efficiency, scutellarein (SCU), naringenin (NAR), chrysoeriol (CHRYS), diosmetin (DIOS), acacetin (ACA) and scutellarein-7-methyl ether (SCU7Me). In Ocimum basilicum (Sweet basil), this protein is Flavonoid 7-O-methyltransferase 2.